The sequence spans 426 residues: Histidine--tRNA ligase (426 aa).

This sequence belongs to the class-II aminoacyl-tRNA synthetase family. Homodimer.

Its subcellular location is the cytoplasm. It carries out the reaction tRNA(His) + L-histidine + ATP = L-histidyl-tRNA(His) + AMP + diphosphate + H(+). In Shewanella baltica (strain OS195), this protein is Histidine--tRNA ligase.